The primary structure comprises 159 residues: MSQAWVPGLAPTLLFSLLAGPQKIAAKCGLILACPKGFKCCGDSCCQENELFPGPVRIFVIIFLVILSVFCICGLAKCFCRNCREPEPDSPVDCRGPLELPSIIPPERVRVSLSAPPPPYSEVILKPSLGPTPTEPPPPYSFRPEEYTGDQRGIDNPAF.

The N-terminal stretch at 1 to 26 (MSQAWVPGLAPTLLFSLLAGPQKIAA) is a signal peptide. Residues 27-57 (KCGLILACPKGFKCCGDSCCQENELFPGPVR) lie on the Extracellular side of the membrane. Residues 58–78 (IFVIIFLVILSVFCICGLAKC) form a helical membrane-spanning segment. The Cytoplasmic portion of the chain corresponds to 79-159 (FCRNCREPEP…DQRGIDNPAF (81 aa)). The segment at 122 to 159 (EVILKPSLGPTPTEPPPPYSFRPEEYTGDQRGIDNPAF) is disordered.

It is found in the membrane. This Homo sapiens (Human) protein is Transmembrane protein 92 (TMEM92).